A 398-amino-acid polypeptide reads, in one-letter code: Cholinephosphotransferase 1 (398 aa).

Alanine 2 is subject to N-acetylalanine. Topologically, residues 2-62 are cytoplasmic; it reads AAGAGARPAP…LLQWIPLWMA (61 aa). Residues 63 to 83 form a helical membrane-spanning segment; that stretch reads PNTITLIGLAINLVTTLVLIF. Residue asparagine 64 participates in CDP-choline binding. Over 84–93 the chain is Lumenal; sequence YCPTVTEEAP. A helical transmembrane segment spans residues 94 to 118; it reads YWTYLLCALGLFIYQSLDAIDGKQA. Mg(2+) is bound by residues aspartate 111 and aspartate 114. Residue arginine 119 coordinates CDP-choline. The Cytoplasmic segment spans residues 119-125; sequence RRTNSCS. A helical transmembrane segment spans residues 126–150; sequence PLGELFDHGCDSLSTVFMAIGASIA. Position 132 (aspartate 132) interacts with Mg(2+). Histidine 133 serves as the catalytic Proton acceptor. Aspartate 136 is a Mg(2+) binding site. Residues 151–160 are Lumenal-facing; sequence VRLGTHPDWL. Residues 161-179 form a helical membrane-spanning segment; the sequence is FFCSFVGMFMFYCAHWQTY. Over 180-190 the chain is Cytoplasmic; the sequence is VSGVLRFGRVD. Residues 191 to 207 traverse the membrane as a helical segment; the sequence is VTEIQVALVIVFMLSTF. At 208–222 the chain is on the lumenal side; it reads GGATMWDYTIPILEI. A helical membrane pass occupies residues 223–248; it reads KLKIVPVLGVVGGLIFSCSNYFHVIL. At 249–265 the chain is on the cytoplasmic side; it reads HGGVGKNGSTIAGTSVL. The helical transmembrane segment at 266 to 281 threads the bilayer; the sequence is SPGLHIGLIIILAIMI. At 282-293 the chain is on the lumenal side; sequence YKKSATNMFEKH. A helical membrane pass occupies residues 294–316; that stretch reads PCLYTLMFGCVFAKVAQKLVIAH. Residues 317–329 are Cytoplasmic-facing; it reads MTKSELYLQDTVF. The helical transmembrane segment at 330-339 threads the bilayer; the sequence is IGPGLLFLDQ. The Lumenal portion of the chain corresponds to 340–346; that stretch reads YFNNFID. The chain crosses the membrane as a helical span at residues 347–376; the sequence is EYVVLWIAMVISSFDMMIYFTSLCLQISRH. The Cytoplasmic segment spans residues 377-398; sequence LHLNIFKTSCQQAPEQVYKHID.

It belongs to the CDP-alcohol phosphatidyltransferase class-I family. Mg(2+) is required as a cofactor. Mn(2+) serves as cofactor. Expressed in brain, heart, lung, liver, spleen, intestine and muscle. Down-regulated in kidney of type 2 diabetic KK/Ta mice.

Its subcellular location is the golgi apparatus membrane. The enzyme catalyses CDP-choline + a 1,2-diacyl-sn-glycerol = a 1,2-diacyl-sn-glycero-3-phosphocholine + CMP + H(+). It carries out the reaction 1-octadecanoyl-2-(5Z,8Z,11Z,14Z-eicosatetraenoyl)-sn-glycerol + CDP-choline = 1-octadecanoyl-2-(5Z,8Z,11Z,14Z-eicosatetraenoyl)-sn-glycero-3-phosphocholine + CMP + H(+). It catalyses the reaction 1-hexadecanoyl-2-(9Z-octadecenoyl)-sn-glycerol + CDP-choline = 1-hexadecanoyl-2-(9Z-octadecenoyl)-sn-glycero-3-phosphocholine + CMP + H(+). The catalysed reaction is 1-hexadecanoyl-2-(4Z,7Z,10Z,13Z,16Z,19Z-docosahexaenoyl)-sn-glycerol + CDP-choline = 1-hexadecanoyl-2-(4Z,7Z,10Z,13Z,16Z,19Z-docosahexaenoyl)-sn-glycero-3-phosphocholine + CMP + H(+). The enzyme catalyses 1,2-dioctanoyl-sn-glycerol + CDP-choline = 1,2-dioctanoyl-sn-glycero-3-phosphocholine + CMP + H(+). Its pathway is phospholipid metabolism; phosphatidylcholine biosynthesis; phosphatidylcholine from phosphocholine: step 2/2. Its function is as follows. Catalyzes the final step of de novo phosphatidylcholine (PC) synthesis, i.e. the transfer of choline phosphate from CDP-choline to the free hydroxyl of a diacylglycerol (DAG), producing a PC. It thereby plays a central role in the formation and maintenance of vesicular membranes. The polypeptide is Cholinephosphotransferase 1 (Mus musculus (Mouse)).